Consider the following 340-residue polypeptide: Arginase 1, mitochondrial (340 aa).

The N-terminal 24 residues, methionine 1–alanine 24, are a transit peptide targeting the mitochondrion. Positions 159, 183, 185, and 187 each coordinate Mn(2+). Substrate contacts are provided by residues histidine 185–tyrosine 189 and glutamate 193–asparagine 195. Positions 268 and 270 each coordinate Mn(2+). Glutamate 311 contributes to the substrate binding site.

The protein belongs to the arginase family. Mn(2+) serves as cofactor.

The protein resides in the mitochondrion. It catalyses the reaction L-arginine + H2O = urea + L-ornithine. It functions in the pathway nitrogen metabolism; urea cycle; L-ornithine and urea from L-arginine: step 1/1. Functionally, catalyzes the hydrolysis of L-arginine to urea and L-ornithine. The latter can be utilized in the urea cycle or as a precursor for the synthesis of both polyamines and proline. This chain is Arginase 1, mitochondrial (ARG1), found in Oryza sativa subsp. japonica (Rice).